Consider the following 333-residue polypeptide: Transaldolase (333 aa).

Lys-136 (schiff-base intermediate with substrate) is an active-site residue.

This sequence belongs to the transaldolase family. Type 1 subfamily. As to quaternary structure, homodimer.

The protein resides in the cytoplasm. It catalyses the reaction D-sedoheptulose 7-phosphate + D-glyceraldehyde 3-phosphate = D-erythrose 4-phosphate + beta-D-fructose 6-phosphate. Its pathway is carbohydrate degradation; pentose phosphate pathway; D-glyceraldehyde 3-phosphate and beta-D-fructose 6-phosphate from D-ribose 5-phosphate and D-xylulose 5-phosphate (non-oxidative stage): step 2/3. In terms of biological role, transaldolase is important for the balance of metabolites in the pentose-phosphate pathway. This chain is Transaldolase, found in Acidobacterium capsulatum (strain ATCC 51196 / DSM 11244 / BCRC 80197 / JCM 7670 / NBRC 15755 / NCIMB 13165 / 161).